The primary structure comprises 329 residues: Glycerol-3-phosphate dehydrogenase [NAD(P)+] (329 aa).

Residues serine 10, tryptophan 11, arginine 31, and lysine 105 each coordinate NADPH. Residues lysine 105, glycine 134, and serine 136 each coordinate sn-glycerol 3-phosphate. Alanine 138 is an NADPH binding site. Positions 189, 242, 252, 253, and 254 each coordinate sn-glycerol 3-phosphate. Catalysis depends on lysine 189, which acts as the Proton acceptor. Position 253 (arginine 253) interacts with NADPH. 2 residues coordinate NADPH: valine 277 and glutamate 279.

This sequence belongs to the NAD-dependent glycerol-3-phosphate dehydrogenase family.

It is found in the cytoplasm. It carries out the reaction sn-glycerol 3-phosphate + NAD(+) = dihydroxyacetone phosphate + NADH + H(+). The enzyme catalyses sn-glycerol 3-phosphate + NADP(+) = dihydroxyacetone phosphate + NADPH + H(+). It participates in membrane lipid metabolism; glycerophospholipid metabolism. Catalyzes the reduction of the glycolytic intermediate dihydroxyacetone phosphate (DHAP) to sn-glycerol 3-phosphate (G3P), the key precursor for phospholipid synthesis. The sequence is that of Glycerol-3-phosphate dehydrogenase [NAD(P)+] from Neisseria meningitidis serogroup A / serotype 4A (strain DSM 15465 / Z2491).